The sequence spans 415 residues: Serine hydroxymethyltransferase (415 aa).

Residues Leu117 and 121–123 (GHL) each bind (6S)-5,6,7,8-tetrahydrofolate. An N6-(pyridoxal phosphate)lysine modification is found at Lys226. Residues Glu241 and 349–351 (SPF) each bind (6S)-5,6,7,8-tetrahydrofolate.

It belongs to the SHMT family. As to quaternary structure, homodimer. Pyridoxal 5'-phosphate serves as cofactor.

It is found in the cytoplasm. The enzyme catalyses (6R)-5,10-methylene-5,6,7,8-tetrahydrofolate + glycine + H2O = (6S)-5,6,7,8-tetrahydrofolate + L-serine. The protein operates within one-carbon metabolism; tetrahydrofolate interconversion. It functions in the pathway amino-acid biosynthesis; glycine biosynthesis; glycine from L-serine: step 1/1. Its function is as follows. Catalyzes the reversible interconversion of serine and glycine with tetrahydrofolate (THF) serving as the one-carbon carrier. This reaction serves as the major source of one-carbon groups required for the biosynthesis of purines, thymidylate, methionine, and other important biomolecules. Also exhibits THF-independent aldolase activity toward beta-hydroxyamino acids, producing glycine and aldehydes, via a retro-aldol mechanism. The chain is Serine hydroxymethyltransferase from Geotalea daltonii (strain DSM 22248 / JCM 15807 / FRC-32) (Geobacter daltonii).